A 316-amino-acid polypeptide reads, in one-letter code: L-lactate dehydrogenase (316 aa).

34–39 (DVVEGV) contributes to the NAD(+) binding site. Substrate is bound by residues arginine 89, asparagine 121, and arginine 152. Asparagine 121 contributes to the NAD(+) binding site. The Proton acceptor role is filled by histidine 172.

This sequence belongs to the LDH/MDH superfamily. LDH family. Homotetramer.

It catalyses the reaction (S)-lactate + NAD(+) = pyruvate + NADH + H(+). It functions in the pathway fermentation; pyruvate fermentation to lactate; (S)-lactate from pyruvate: step 1/1. The polypeptide is L-lactate dehydrogenase (Botryococcus braunii (Green alga)).